A 170-amino-acid polypeptide reads, in one-letter code: Peptide deformylase (170 aa).

Fe cation is bound by residues C93 and H135. The active site involves E136. A Fe cation-binding site is contributed by H139.

This sequence belongs to the polypeptide deformylase family. It depends on Fe(2+) as a cofactor.

It catalyses the reaction N-terminal N-formyl-L-methionyl-[peptide] + H2O = N-terminal L-methionyl-[peptide] + formate. Removes the formyl group from the N-terminal Met of newly synthesized proteins. Requires at least a dipeptide for an efficient rate of reaction. N-terminal L-methionine is a prerequisite for activity but the enzyme has broad specificity at other positions. This is Peptide deformylase from Syntrophobacter fumaroxidans (strain DSM 10017 / MPOB).